The primary structure comprises 475 residues: Divinyl ether synthase CYP74M1 (475 aa).

Cysteine 427 serves as a coordination point for heme.

The protein belongs to the cytochrome P450 family. Heme is required as a cofactor.

It carries out the reaction (13S)-hydroperoxy-(9Z,11E)-octadecadienoate = etheroleate + H2O. The catalysed reaction is (13S)-hydroperoxy-(9Z,11E,15Z)-octadecatrienoate = etherolenate + H2O. It participates in lipid metabolism; oxylipin biosynthesis. Divinyl ether synthase involved in oxylipin biosynthesis. Catalyzes the conversion of (13S)-hydroperoxy-(9Z,11E)-octadecadienoate (13-HPOD) to etheroleate and (13S)-hydroperoxy-(9Z,11E,15Z)-octadecatrienoate (13-HPOT) to etherolenate. Has no activity with the corresponding 9-hydroperoxides (9-HPOD and 9-HPOT). This chain is Divinyl ether synthase CYP74M1, found in Selaginella moellendorffii (Spikemoss).